The primary structure comprises 621 residues: MEIPIAEELAKKQKSISVAEFFEKNRQILGFDSAPRSLITTVKEAVDNSLDACEEAGILPDILVQVERTGQDYVTVIIEDNGPGIVREQIPKVFAKLLYGSRFHALKQSRGQQGIGISAAVLYAQMTAGRHTKILSKTGSNVPAHYYELMINTSTNEPDILMDEVRDWFRPHGTQIELEMKAAYVKGRRQSIYEYLKATAIVNPHARITLIDPDGNEEVFERATDKIPDPAEEILPHPEGIELGTLMKMLHYTERQKLAPFLRYSFCKIGLLTADEICKAAGLDPEIDPHALGRHEARKLIEAFQKVKIMSPPTDCLSPIGEELIYRGLEKETNVDFIATSTRKPAVYSGNPFVVEVGLAYGGNLPKEEKISIMRFANRVPLLYQQGGCVTTHAVEDIRWKQYGLNQPGGGVPIGPVLLLIHVASINVPFTSESKDAIADIPVIKEEVDLAVKEVARKLKHYLSKQSNLKKRREKEIIITKVLPKMAVKVANILEKDVPDINPVVAKIMGNLLVYRKVKSNGDGTADVAIKVKNFGTSAHSFRVHEMLPCKINGAKPEPKVVTMDNDYDYVWDVSAAAGSSKVLSYKIESATVEELRKLPQLIVEGIEEELVTGAKAFRGV.

ATP-binding positions include Asn48, Asp80, 101 to 102 (SR), 111 to 118 (GQQGIGIS), and Lys435.

It belongs to the TOP6B family. As to quaternary structure, homodimer. Heterotetramer of two Top6A and two Top6B chains.

It catalyses the reaction ATP-dependent breakage, passage and rejoining of double-stranded DNA.. Functionally, relaxes both positive and negative superturns and exhibits a strong decatenase activity. This Methanosarcina acetivorans (strain ATCC 35395 / DSM 2834 / JCM 12185 / C2A) protein is Type 2 DNA topoisomerase 6 subunit B.